Reading from the N-terminus, the 196-residue chain is Agamous-like MADS-box protein AGL31 (196 aa).

The region spanning 1–61 (MGRKKVEIKR…GKLYKSASGD (61 aa)) is the MADS-box domain. The 91-residue stretch at 80-170 (ALDLAEKTRN…ASQVGKKTFL (91 aa)) folds into the K-box domain.

As to expression, expressed in most plant tissues, roots, seedlings, leaves, stems, inflorescences, pollen, siliques and flowers.

The protein localises to the nucleus. Functionally, probable transcription factor that prevents vernalization by short periods of cold. Acts as a floral repressor. The sequence is that of Agamous-like MADS-box protein AGL31 (AGL31) from Arabidopsis thaliana (Mouse-ear cress).